The primary structure comprises 93 residues: Cobalt transport protein CbiN (93 aa).

2 helical membrane passes run L5–G25 and L63–C83.

The protein belongs to the CbiN family. In terms of assembly, forms an energy-coupling factor (ECF) transporter complex composed of an ATP-binding protein (A component, CbiO), a transmembrane protein (T component, CbiQ) and 2 possible substrate-capture proteins (S components, CbiM and CbiN) of unknown stoichimetry.

It is found in the cell inner membrane. It functions in the pathway cofactor biosynthesis; adenosylcobalamin biosynthesis. In terms of biological role, part of the energy-coupling factor (ECF) transporter complex CbiMNOQ involved in cobalt import. The protein is Cobalt transport protein CbiN of Salmonella paratyphi B (strain ATCC BAA-1250 / SPB7).